The primary structure comprises 695 residues: Amphiphysin (695 aa).

Coiled-coil stretches lie at residues 10-83 and 144-191; these read AKNV…SLHE and DYDS…QEEL. A BAR domain is found at 24-240; sequence VLQKLGKADE…MTKLGDQHAD (217 aa). 2 disordered regions span residues 244 to 312 and 486 to 617; these read TIQG…VTPT and GAPG…EASQ. Residue S252 is modified to Phosphoserine. The residue at position 260 (T260) is a Phosphothreonine. Residues 261–274 are compositionally biased toward pro residues; the sequence is PSPPEEPSPLPSPT. Phosphoserine occurs at positions 262, 268, 272, and 276. T280 bears the Phosphothreonine mark. Residues S506 and S638 each carry the phosphoserine modification. An SH3 domain is found at 622-695; sequence GFLYKVETLH…FPENFTRRLD (74 aa).

Heterodimer with BIN1. Binds SH3GLB1. Interacts with REPS1 and SGIP1. Binds AP2A2. Interacts with AP2B1. Interacts with DNM1 and SYNJ1. In terms of tissue distribution, neurons, certain endocrine cell types and spermatocytes.

It is found in the cytoplasmic vesicle. Its subcellular location is the secretory vesicle. The protein localises to the synaptic vesicle membrane. It localises to the cytoplasm. The protein resides in the cytoskeleton. Functionally, may participate in mechanisms of regulated exocytosis in synapses and certain endocrine cell types. May control the properties of the membrane associated cytoskeleton. This chain is Amphiphysin (AMPH), found in Homo sapiens (Human).